A 349-amino-acid polypeptide reads, in one-letter code: Twinfilin-2-B (349 aa).

ADF-H domains lie at 4 to 139 and 177 to 313; these read QTGI…KHVS and GLSF…DEVH. A disordered region spans residues 321–349; the sequence is QAFAKPKGPAGKRGQKRLIKGPGENGEDS.

It belongs to the actin-binding proteins ADF family. Twinfilin subfamily. Interacts with G-actin; ADP-actin form and capping protein (CP).

The protein resides in the cytoplasm. The protein localises to the cytoskeleton. It localises to the perinuclear region. In terms of biological role, actin-binding protein involved in motile and morphological processes. Inhibits actin polymerization, likely by sequestering G-actin. This chain is Twinfilin-2-B (twf2-b), found in Xenopus laevis (African clawed frog).